The chain runs to 1380 residues: DNA-directed RNA polymerase subunit beta (1380 aa).

This sequence belongs to the RNA polymerase beta chain family. In terms of assembly, the RNAP catalytic core consists of 2 alpha, 1 beta, 1 beta' and 1 omega subunit. When a sigma factor is associated with the core the holoenzyme is formed, which can initiate transcription.

The catalysed reaction is RNA(n) + a ribonucleoside 5'-triphosphate = RNA(n+1) + diphosphate. Functionally, DNA-dependent RNA polymerase catalyzes the transcription of DNA into RNA using the four ribonucleoside triphosphates as substrates. The protein is DNA-directed RNA polymerase subunit beta of Sinorhizobium medicae (strain WSM419) (Ensifer medicae).